Reading from the N-terminus, the 1009-residue chain is DENN domain-containing protein 2A (1009 aa).

Disordered regions lie at residues 15-153 (AEAS…LRFQ), 171-334 (KDGS…HRKS), 434-479 (KLLD…KKRK), and 498-532 (KRVK…LKAH). 4 stretches are compositionally biased toward basic and acidic residues: residues 45–59 (NIKD…KKEV), 130–147 (QPER…EPRL), 218–247 (HPSD…DRSL), and 275–284 (HAGEGDKDGK). Residues 297 to 314 (PPLPSLPPPPLPSSPPPS) are compositionally biased toward pro residues. Residues 434-443 (KLLDTRKLSR) are compositionally biased toward basic and acidic residues. The span at 503–513 (LSQSMESNSGK) shows a compositional bias: polar residues. Ser551 carries the phosphoserine modification. One can recognise a uDENN domain in the interval 566-715 (EYFVVVSLHK…PFPALGKTIL (150 aa)). The 134-residue stretch at 737 to 870 (RLEHVDFESL…LQVALEHILE (134 aa)) folds into the cDENN domain. The dDENN domain maps to 872–969 (RNELACEQDE…QERELRRQDA (98 aa)).

The protein localises to the cytoplasm. The protein resides in the cytoskeleton. Its function is as follows. Guanine nucleotide exchange factor (GEF) which may activate RAB9A and RAB9B. Promotes the exchange of GDP to GTP, converting inactive GDP-bound Rab proteins into their active GTP-bound form. May play a role in late endosomes back to trans-Golgi network/TGN transport. This chain is DENN domain-containing protein 2A (DENND2A), found in Homo sapiens (Human).